Consider the following 201-residue polypeptide: Putative lipoprotein Hmuk_2215 (201 aa).

The N-terminal stretch at 1–22 (MCPRPRRAVLLGLGVAMSAIAG) is a signal peptide. Cys23 is subject to N-acetylcysteine. Cys23 carries S-archaeol cysteine lipidation. 2 disordered regions span residues 25-78 (ETAP…ETSE) and 182-201 (ATRAVQQGPEPAEFDDGDCP). A compositionally biased stretch (basic and acidic residues) spans 69–78 (TRADETETSE).

It localises to the cell membrane. The chain is Putative lipoprotein Hmuk_2215 from Halomicrobium mukohataei (strain ATCC 700874 / DSM 12286 / JCM 9738 / NCIMB 13541) (Haloarcula mukohataei).